Consider the following 95-residue polypeptide: Protein TusB (95 aa).

Belongs to the DsrH/TusB family. Heterohexamer, formed by a dimer of trimers. The hexameric TusBCD complex contains 2 copies each of TusB, TusC and TusD. The TusBCD complex interacts with TusE.

The protein localises to the cytoplasm. In terms of biological role, part of a sulfur-relay system required for 2-thiolation of 5-methylaminomethyl-2-thiouridine (mnm(5)s(2)U) at tRNA wobble positions. The protein is Protein TusB of Escherichia coli O81 (strain ED1a).